The primary structure comprises 660 residues: Glycine betaine transporter (660 aa).

The Cytoplasmic segment spans residues 1–13 (MPSKTSSRFANIN). A helical membrane pass occupies residues 14 to 34 (PNVFVSTIMIIAIFLAIVILA). Topologically, residues 35-52 (PDAFELLTQQLKNWITES) are periplasmic. Residues 53 to 73 (FSWFYVLSVAFFLIVLGYIAC) form a helical membrane-spanning segment. At 74 to 93 (SSSGKIKLGPDHSQPDYSNS) the chain is on the cytoplasmic side. A helical membrane pass occupies residues 94–114 (SWFAMLFTAGMGIGLMFFGIA). The Periplasmic segment spans residues 115–139 (EPIMHYVSPPSGEPETILAAQQSMR). The chain crosses the membrane as a helical span at residues 140–160 (VTFFHWGLHAWGIYAIVALSL). Residues 161–195 (SYFAYRHDLPLKIRSSLYPLIGKKIYGPMGDAVDT) lie on the Cytoplasmic side of the membrane. A helical membrane pass occupies residues 196 to 216 (FATIGTIFGVATTLGFGVTQI). Residues 217–230 (SSGLNYLFGFEPTS) are Periplasmic-facing. Residues 231-251 (FSKVVLIIIVSAMAALSVGLG) form a helical membrane-spanning segment. The Cytoplasmic portion of the chain corresponds to 252–263 (LDKGVKRLAELN). A helical membrane pass occupies residues 264–284 (LVLAVTLLAFVFFTSATVYLL). The Periplasmic portion of the chain corresponds to 285 to 316 (QTTIQNTGQYISNLFEMTFNLYAYQPNGWIGG). A helical transmembrane segment spans residues 317–337 (WTIMYWAWWISWSPFVGMFIA). Over 338–347 (RVSRGRTIRE) the chain is Cytoplasmic. Residues 348–368 (FIIGVMLIPTGFTLIWMGFMG) form a helical membrane-spanning segment. Topologically, residues 369–401 (NAGLYSILHDGNLSLLNAVQRDSSVALFEFLHS) are periplasmic. Residues 402–422 (LPFSGVMSLLATVLVVLFFVT) form a helical membrane-spanning segment. Topologically, residues 423–446 (SADSGALVVDYLTAKSEDSPVWQR) are cytoplasmic. The chain crosses the membrane as a helical span at residues 447-467 (LFWIVVMAGLAIILLLAGGLT). At 468 to 471 (ALQS) the chain is on the periplasmic side. A helical transmembrane segment spans residues 472–492 (ATIMSALPFTFIMLLICWGLI). Residues 493–660 (KALRIDSTKM…LSVMRAQTGN (168 aa)) are Cytoplasmic-facing.

It belongs to the BCCT transporter (TC 2.A.15) family.

It is found in the cell inner membrane. With respect to regulation, uptake is activated by NaCl, KCl or mannose gradients across the cell membrane. Inhibited by the protonophore 3,3',4',5-tetrachlorosalicylanilide (TCS). Its function is as follows. Energy-dependent uptake of glycine betaine in response to high salinity. This Acinetobacter baylyi (strain ATCC 33305 / BD413 / ADP1) protein is Glycine betaine transporter.